Here is a 126-residue protein sequence, read N- to C-terminus: Large-conductance mechanosensitive channel (126 aa).

The next 2 membrane-spanning stretches (helical) occupy residues 14–34 (VIDL…VKSL) and 67–87 (GSFL…FILV).

This sequence belongs to the MscL family. Homopentamer.

The protein resides in the cell membrane. Functionally, channel that opens in response to stretch forces in the membrane lipid bilayer. May participate in the regulation of osmotic pressure changes within the cell. In Lactiplantibacillus plantarum (strain ATCC BAA-793 / NCIMB 8826 / WCFS1) (Lactobacillus plantarum), this protein is Large-conductance mechanosensitive channel.